A 187-amino-acid chain; its full sequence is NADH-quinone oxidoreductase subunit B (187 aa).

A compositionally biased stretch (basic and acidic residues) spans 1 to 10; that stretch reads MTADHNRALH. A disordered region spans residues 1–22; the sequence is MTADHNRALHDAPTARGGEVRQ. Residues cysteine 66, cysteine 67, cysteine 131, and cysteine 161 each contribute to the [4Fe-4S] cluster site.

This sequence belongs to the complex I 20 kDa subunit family. NDH-1 is composed of 14 different subunits. Subunits NuoB, C, D, E, F, and G constitute the peripheral sector of the complex. [4Fe-4S] cluster is required as a cofactor.

The protein resides in the cell inner membrane. The enzyme catalyses a quinone + NADH + 5 H(+)(in) = a quinol + NAD(+) + 4 H(+)(out). Functionally, NDH-1 shuttles electrons from NADH, via FMN and iron-sulfur (Fe-S) centers, to quinones in the respiratory chain. Couples the redox reaction to proton translocation (for every two electrons transferred, four hydrogen ions are translocated across the cytoplasmic membrane), and thus conserves the redox energy in a proton gradient. The chain is NADH-quinone oxidoreductase subunit B from Erythrobacter litoralis (strain HTCC2594).